The following is a 908-amino-acid chain: Metabotropic glutamate receptor 8 (908 aa).

Residues 1-33 form the signal peptide; the sequence is MVCEGKRSASCPCFFLLTAKFYWILTMMQRTHS. The Extracellular segment spans residues 34–583; that stretch reads QEYAHSIRVD…IIKLEWHSPW (550 aa). A disulfide bond links cysteine 64 and cysteine 106. An N-linked (GlcNAc...) asparagine glycan is attached at asparagine 95. L-glutamate contacts are provided by residues serine 156, 177-179, and tyrosine 227; that span reads AST. Cystine bridges form between cysteine 246–cysteine 534, cysteine 369–cysteine 384, cysteine 424–cysteine 431, cysteine 516–cysteine 535, cysteine 520–cysteine 538, cysteine 541–cysteine 553, and cysteine 556–cysteine 569. An N-linked (GlcNAc...) asparagine glycan is attached at asparagine 298. Aspartate 309 lines the L-glutamate pocket. Lysine 401 is a binding site for L-glutamate. Asparagine 452 and asparagine 480 each carry an N-linked (GlcNAc...) asparagine glycan. Asparagine 565 carries an N-linked (GlcNAc...) asparagine glycan. The chain crosses the membrane as a helical span at residues 584 to 608; it reads AVVPVFVAILGIIATTFVIVTFVRY. Topologically, residues 609–620 are cytoplasmic; the sequence is NDTPIVRASGRE. Residues 621–641 traverse the membrane as a helical segment; that stretch reads LSYVLLTGIFLCYSITFLMIA. Over 642–647 the chain is Extracellular; sequence APDTII. The chain crosses the membrane as a helical span at residues 648–668; sequence CSFRRVFLGLGMCFSYAALLT. The Cytoplasmic portion of the chain corresponds to 669 to 695; sequence KTNRIHRIFEQGKKSVTAPKFISPASQ. The helical transmembrane segment at 696 to 716 threads the bilayer; the sequence is LVITFSLISVQLLGVFVWFVV. Topologically, residues 717-746 are extracellular; it reads DPPHIIIDYGEQRTLDPEKARGVLKCDISD. A helical membrane pass occupies residues 747–768; it reads LSLICSLGYSILLMVTCTVYAI. The Cytoplasmic portion of the chain corresponds to 769-781; sequence KTRGVPETFNEAK. A helical transmembrane segment spans residues 782 to 803; it reads PIGFTMYTTCIIWLAFIPIFFG. Residues 804–818 are Extracellular-facing; the sequence is TAQSAEKMYIQTTTL. A helical membrane pass occupies residues 819–843; it reads TVSMSLSASVSLGMLYMPKVYIIIF. At 844–908 the chain is on the cytoplasmic side; it reads HPEQNVQKRK…TYISYSNHSI (65 aa). Lysine 882 participates in a covalent cross-link: Glycyl lysine isopeptide (Lys-Gly) (interchain with G-Cter in SUMO1).

Belongs to the G-protein coupled receptor 3 family. Interacts with PICK1.

It is found in the cell membrane. Its function is as follows. G-protein coupled receptor for glutamate. Ligand binding causes a conformation change that triggers signaling via guanine nucleotide-binding proteins (G proteins) and modulates the activity of down-stream effectors, such as adenylate cyclase. Signaling inhibits adenylate cyclase activity. In Homo sapiens (Human), this protein is Metabotropic glutamate receptor 8 (GRM8).